Consider the following 378-residue polypeptide: Erythronate-4-phosphate dehydrogenase (378 aa).

Residues Ser-45 and Thr-66 each coordinate substrate. 2 residues coordinate NAD(+): Asp-146 and Thr-175. The active site involves Arg-208. Asp-232 contributes to the NAD(+) binding site. Residue Glu-237 is part of the active site. His-254 (proton donor) is an active-site residue. Gly-257 is a binding site for NAD(+). Position 258 (Tyr-258) interacts with substrate.

It belongs to the D-isomer specific 2-hydroxyacid dehydrogenase family. PdxB subfamily. Homodimer.

It localises to the cytoplasm. The catalysed reaction is 4-phospho-D-erythronate + NAD(+) = (R)-3-hydroxy-2-oxo-4-phosphooxybutanoate + NADH + H(+). The protein operates within cofactor biosynthesis; pyridoxine 5'-phosphate biosynthesis; pyridoxine 5'-phosphate from D-erythrose 4-phosphate: step 2/5. Functionally, catalyzes the oxidation of erythronate-4-phosphate to 3-hydroxy-2-oxo-4-phosphonooxybutanoate. This is Erythronate-4-phosphate dehydrogenase from Salmonella paratyphi A (strain ATCC 9150 / SARB42).